Here is a 524-residue protein sequence, read N- to C-terminus: M phase phosphoprotein 10 (524 aa).

The Nuclear localization signal 1 motif lies at 85-92; the sequence is VKRFAKNP. 2 disordered regions span residues 100–243 and 259–283; these read KLAL…KLGK and KLKDLSEDEEAEIENKGNEKLSTHE. Over residues 109–168 the composition is skewed to acidic residues; the sequence is DDIDEMDMDGFDSDDVDDEDKEIESNDSEGEDEEEEEEDEEEEEEEEEEEEEEKDGDNEG. A coiled-coil region spans residues 131-165; the sequence is IESNDSEGEDEEEEEEDEEEEEEEEEEEEEEKDGD. Basic and acidic residues predominate over residues 169–180; it reads IEDKFFKIKELE. Residues 181–191 are compositionally biased toward acidic residues; sequence EFLEEGEAEEY. Residues 196–207 show a composition bias toward basic residues; the sequence is KNKKGVAQRKKQ. The segment covering 210-238 has biased composition (acidic residues); that stretch reads SDDEDEEDDDDEEEDVEFDAFAGGDDEET. A coiled-coil region spans residues 257 to 302; sequence KMKLKDLSEDEEAEIENKGNEKLSTHERARLKLQSKIEQMEKANLD. Residues 271–283 are compositionally biased toward basic and acidic residues; the sequence is IENKGNEKLSTHE. A Nuclear localization signal 2 motif is present at residues 373-380; that stretch reads GKREAKEL. Residues 479-524 form a disordered region; the sequence is KGDIKDESELTQEDRKRRRANKKRKFKAESANEPPKKALDTSTKNP. The span at 480–493 shows a compositional bias: basic and acidic residues; it reads GDIKDESELTQEDR. Basic residues predominate over residues 494–504; that stretch reads KRRRANKKRKF. Residues 505 to 517 show a composition bias toward basic and acidic residues; sequence KAESANEPPKKAL.

The protein belongs to the MPP10 family. Component of the ribosomal small subunit (SSU) processome. Interacts with THAL in the nucleus.

It is found in the nucleus. The protein localises to the nucleolus. Involved in nucleolar processing of pre-18S ribosomal RNA. This chain is M phase phosphoprotein 10, found in Arabidopsis thaliana (Mouse-ear cress).